The primary structure comprises 178 residues: Protein-export protein SecB (178 aa).

Positions 1-13 (MADEGDVLTDLDM) are enriched in acidic residues. Residues 1–25 (MADEGDVLTDLDMDPAAGGNGADNR) form a disordered region.

Belongs to the SecB family. Homotetramer, a dimer of dimers. One homotetramer interacts with 1 SecA dimer.

The protein localises to the cytoplasm. One of the proteins required for the normal export of preproteins out of the cell cytoplasm. It is a molecular chaperone that binds to a subset of precursor proteins, maintaining them in a translocation-competent state. It also specifically binds to its receptor SecA. In Erythrobacter litoralis (strain HTCC2594), this protein is Protein-export protein SecB.